We begin with the raw amino-acid sequence, 21 residues long: Apolipophorin 2 (21 aa).

As to expression, expressed in hemolymph.

The protein resides in the secreted. Its function is as follows. Constitutes the major component of lipophorin, which mediates transport for various types of lipids in hemolymph. Acts by forming lipoprotein particles that bind lipoproteins and lipids. This chain is Apolipophorin 2, found in Galleria mellonella (Greater wax moth).